The chain runs to 186 residues: Elongation factor P (186 aa).

The N-alpha-linked (Rha) arginine glycan is linked to Arg-32.

This sequence belongs to the elongation factor P family. Glycosylated ar Arg-32 by EarP: arginine rhamnosylation is required for EF-P function and rescue of polyproline stalled ribosomes.

The protein resides in the cytoplasm. It participates in protein biosynthesis; polypeptide chain elongation. In terms of biological role, involved in peptide bond synthesis. Stimulates efficient translation and peptide-bond synthesis on native or reconstituted 70S ribosomes in vitro. Probably functions indirectly by altering the affinity of the ribosome for aminoacyl-tRNA, thus increasing their reactivity as acceptors for peptidyl transferase. This Shewanella oneidensis (strain ATCC 700550 / JCM 31522 / CIP 106686 / LMG 19005 / NCIMB 14063 / MR-1) protein is Elongation factor P.